The sequence spans 100 residues: Small ribosomal subunit protein uS14m (100 aa).

Belongs to the universal ribosomal protein uS14 family.

The protein localises to the mitochondrion. The protein is Small ribosomal subunit protein uS14m (RPS14) of Vicia faba (Broad bean).